Consider the following 642-residue polypeptide: Nocturnin (642 aa).

Positions 50-87 are disordered; the sequence is LEDDDKPPQLFSVTDEPPSPNEEDYKPPNHHEDDGKLA. A compositionally biased stretch (basic and acidic residues) spans 72 to 87; sequence EDYKPPNHHEDDGKLA. Glu-363 serves as a coordination point for Mg(2+). Residues Glu-363, Asn-430, 453–456, 491–493, and His-600 each bind substrate; these read HLKA and DFN. Residues 611–642 form a disordered region; that stretch reads PPTENGKESGSGSGSDGENETEVEGSKHGSIQ.

Belongs to the CCR4/nocturin family. In terms of assembly, associates to the CCR4-NOT complex composed of at least Pop2/Caf1-55, Ccr4, Not1, Rga/Not2, and Not3. Mg(2+) serves as cofactor. As to expression, expressed in the head, in the dorsal neurons DN3, a subgroup of clock neurons (at protein level). Ubiquitously expressed in both males and females.

Its subcellular location is the cytoplasm. The enzyme catalyses NADP(+) + H2O = phosphate + NAD(+). The catalysed reaction is NADPH + H2O = phosphate + NADH. Functionally, phosphatase which catalyzes the conversion of NADP(+) to NAD(+) and of NADPH to NADH. Shows a small preference for NADPH over NADP(+). Because of its association with the CCR4-NOT complex, has a role in mRNA deadenylation and decay. Required at the pupal stage for proper wing morphogenesis after eclosion. In terms of biological role, doesn't have a role in light-mediated behavioral response. Its function is as follows. In dorsal neurons, contributes to the light-mediated behavioral response. The protein is Nocturnin of Drosophila melanogaster (Fruit fly).